A 341-amino-acid polypeptide reads, in one-letter code: Anthranilate phosphoribosyltransferase (341 aa).

Residues glycine 80, 83-84 (GD), threonine 88, 90-93 (NIST), 108-116 (KHGNRAMSS), and serine 120 each bind 5-phospho-alpha-D-ribose 1-diphosphate. Glycine 80 serves as a coordination point for anthranilate. Position 92 (serine 92) interacts with Mg(2+). Asparagine 111 provides a ligand contact to anthranilate. Arginine 166 contributes to the anthranilate binding site. Residues aspartate 225 and glutamate 226 each coordinate Mg(2+).

The protein belongs to the anthranilate phosphoribosyltransferase family. In terms of assembly, homodimer. Requires Mg(2+) as cofactor.

It carries out the reaction N-(5-phospho-beta-D-ribosyl)anthranilate + diphosphate = 5-phospho-alpha-D-ribose 1-diphosphate + anthranilate. The protein operates within amino-acid biosynthesis; L-tryptophan biosynthesis; L-tryptophan from chorismate: step 2/5. In terms of biological role, catalyzes the transfer of the phosphoribosyl group of 5-phosphorylribose-1-pyrophosphate (PRPP) to anthranilate to yield N-(5'-phosphoribosyl)-anthranilate (PRA). The sequence is that of Anthranilate phosphoribosyltransferase from Roseiflexus sp. (strain RS-1).